The sequence spans 39 residues: Photosystem II reaction center protein J (39 aa).

The chain crosses the membrane as a helical span at residues 7 to 27 (IPLWLIATVGGTAALTVVGLF).

It belongs to the PsbJ family. As to quaternary structure, PSII is composed of 1 copy each of membrane proteins PsbA, PsbB, PsbC, PsbD, PsbE, PsbF, PsbH, PsbI, PsbJ, PsbK, PsbL, PsbM, PsbT, PsbX, PsbY, PsbZ, Psb30/Ycf12, at least 3 peripheral proteins of the oxygen-evolving complex and a large number of cofactors. It forms dimeric complexes.

The protein resides in the plastid. It is found in the chloroplast thylakoid membrane. Its function is as follows. One of the components of the core complex of photosystem II (PSII). PSII is a light-driven water:plastoquinone oxidoreductase that uses light energy to abstract electrons from H(2)O, generating O(2) and a proton gradient subsequently used for ATP formation. It consists of a core antenna complex that captures photons, and an electron transfer chain that converts photonic excitation into a charge separation. This is Photosystem II reaction center protein J from Rhodomonas salina (Cryptomonas salina).